Reading from the N-terminus, the 292-residue chain is MEMO1 family protein PF1638 (292 aa).

It belongs to the MEMO1 family.

The sequence is that of MEMO1 family protein PF1638 from Pyrococcus furiosus (strain ATCC 43587 / DSM 3638 / JCM 8422 / Vc1).